The sequence spans 327 residues: Gonadotropin-releasing hormone receptor (327 aa).

The Extracellular segment spans residues 1–38 (MANNASLEQDQNHCSAINNSIPLTQGKLPTLTLSGKIR). 2 N-linked (GlcNAc...) asparagine glycosylation sites follow: Asn-4 and Asn-18. Residues 39-58 (VTVTFFLFLLSTAFNASFLV) form a helical membrane-spanning segment. Residues 59 to 77 (KLQRWTQKRKKGKKLSRMK) lie on the Cytoplasmic side of the membrane. The helical transmembrane segment at 78–97 (VLLKHLTLANLLETLIVMPL) threads the bilayer. Topologically, residues 98 to 115 (DGMWNITVQWYAGEFLCK) are extracellular. The N-linked (GlcNAc...) asparagine glycan is linked to Asn-102. Cys-114 and Cys-195 are disulfide-bonded. A helical membrane pass occupies residues 116-137 (VLSYLKLFSMYAPAFMMVVISL). Over 138-164 (DRSLAVTQPLAVQSKSKLERSMTSLAW) the chain is Cytoplasmic. A helical transmembrane segment spans residues 165-184 (ILSIVFAGPQLYIFRMIYLA). Residues 185–211 (DGSGPAVFSQCVTHCSFPQWWHEAFYN) are Extracellular-facing. Residues 212 to 231 (FFTFSCLFIIPLLIMLICNA) form a helical membrane-spanning segment. The Cytoplasmic segment spans residues 232 to 280 (KIIFALTRVLHQDPRKLQLNQSKNNIPRARLRTLKMTVAFGTSFVICWT). A helical membrane pass occupies residues 281–299 (PYYVLGIWYWFDPEMLNRV). Residues 300–305 (SEPVNH) lie on the Extracellular side of the membrane. Residues 306-325 (FFFLFAFLNPCFDPLIYGYF) form a helical membrane-spanning segment. Residues 326 to 327 (SL) lie on the Cytoplasmic side of the membrane.

It belongs to the G-protein coupled receptor 1 family.

The protein localises to the cell membrane. Functionally, receptor for gonadotropin releasing hormone (GnRH) that mediates the action of GnRH to stimulate the secretion of the gonadotropic hormones luteinizing hormone (LH) and follicle-stimulating hormone (FSH). This receptor mediates its action by association with G-proteins that activate a phosphatidylinositol-calcium second messenger system. In Rattus norvegicus (Rat), this protein is Gonadotropin-releasing hormone receptor (Gnrhr).